Here is a 189-residue protein sequence, read N- to C-terminus: Elongation factor P (189 aa).

This sequence belongs to the elongation factor P family.

It is found in the cytoplasm. It functions in the pathway protein biosynthesis; polypeptide chain elongation. Involved in peptide bond synthesis. Stimulates efficient translation and peptide-bond synthesis on native or reconstituted 70S ribosomes in vitro. Probably functions indirectly by altering the affinity of the ribosome for aminoacyl-tRNA, thus increasing their reactivity as acceptors for peptidyl transferase. This chain is Elongation factor P, found in Campylobacter jejuni subsp. doylei (strain ATCC BAA-1458 / RM4099 / 269.97).